The following is a 541-amino-acid chain: EH domain-containing protein 4 (541 aa).

N-acetylmethionine is present on Met-1. The disordered stretch occupies residues 1-20; the sequence is MFSWMGRQAGGRERSGGMDA. Ser-15 bears the Phosphoserine mark. The region spanning 58 to 289 is the Dynamin-type G domain; the sequence is FENKPMILLV…DLFRDIQSLP (232 aa). The tract at residues 68–75 is G1 motif; that stretch reads GQYSTGKT. 68–75 contributes to the ATP binding site; it reads GQYSTGKT. The tract at residues 94–95 is G2 motif; that stretch reads EP. The G3 motif stretch occupies residues 156–159; sequence DSPG. A Phosphoserine modification is found at Ser-162. Positions 222-225 are G4 motif; the sequence is NKAD. Position 223 (Lys-223) interacts with ATP. Position 246 (Val-246) is a region of interest, G5 motif. Trp-261 is a binding site for ATP. One can recognise an EH domain in the interval 447 to 535; the sequence is DKPVYDELFY…PHLVPPSHRK (89 aa). At Tyr-451 the chain carries Phosphotyrosine. Ser-459 is subject to Phosphoserine. One can recognise an EF-hand domain in the interval 479-514; sequence LPNSVLGKIWKLADCDCDGMLDEEEFALAKHLIKIK. Positions 492, 494, 496, 498, and 503 each coordinate Ca(2+).

It belongs to the TRAFAC class dynamin-like GTPase superfamily. Dynamin/Fzo/YdjA family. EHD subfamily. As to quaternary structure, homooligomer, and heterooligomer with EHD1, EHD2 and EHD3. Forms a complex with EHD4 and MICALL1; the complex controls CDH5 trafficking and coordinates angiogenesis.

It localises to the early endosome membrane. Its subcellular location is the recycling endosome membrane. It is found in the cell membrane. The protein localises to the cell junction. The protein resides in the adherens junction. In terms of biological role, ATP- and membrane-binding protein that probably controls membrane reorganization/tubulation upon ATP hydrolysis. Plays a role in early endosomal transport. During sprouting angiogenesis, in complex with PACSIN2 and MICALL1, forms recycling endosome-like tubular structure at asymmetric adherens junctions to control CDH5 trafficking. The protein is EH domain-containing protein 4 of Mus musculus (Mouse).